The chain runs to 111 residues: Translation initiation factor 1A 1 (111 aa).

The segment at 1 to 26 (MTLADLKKPTSRATPSTEETFTRVRT) is disordered. The S1-like domain maps to 22-96 (TRVRTPRREN…EKADVIWKYT (75 aa)).

It belongs to the eIF-1A family.

Its function is as follows. Seems to be required for maximal rate of protein biosynthesis. Enhances ribosome dissociation into subunits and stabilizes the binding of the initiator Met-tRNA(I) to 40 S ribosomal subunits. This Methanosarcina acetivorans (strain ATCC 35395 / DSM 2834 / JCM 12185 / C2A) protein is Translation initiation factor 1A 1 (eIF1A1).